The sequence spans 358 residues: Spermatogenesis-associated protein 22 (358 aa).

Composition is skewed to polar residues over residues 1–12 (MKRNLNESSARS), 30–51 (QPLTSNPLQNDPGVSTVSDSYG), 81–121 (PASA…TSLR), and 150–159 (QQQKQFQTPE). Disordered stretches follow at residues 1-51 (MKRN…DSYG), 81-122 (PASA…SLRT), and 150-172 (QQQKQFQTPEFPNLPGHKEAEVP).

In terms of assembly, component of a multiprotein complex with MEIOB and RPA2. Interacts with MEIOB. Interacts with the complex BRME1:HSF2BP:BRCA2. Specifically expressed in gonadal germ cells, when male and female germ cells progress through prophase of meiosis I.

The protein localises to the chromosome. Its function is as follows. Meiosis-specific protein required for homologous recombination in meiosis I. The protein is Spermatogenesis-associated protein 22 of Mus musculus (Mouse).